Reading from the N-terminus, the 276-residue chain is MDRVTVSSLKEMKEAGQKIAMITAYDYPSALFAEEAGAEVLLVGDSLGMVVLGYDSTVPVTMEEMLHHVKAVVRGSKRSMVVADMPFMSYQASYTDALYNAGRFLKEGGAQAVKLEGGGEIAELVAKLVTAGIPVMGHIGLTPQSVNALGGYKVQGKDLKTAQKLLDDAKALADAGAFAIVLECVPAALAAKITESIPIPTIGIGSGVNCDGQVLVYHDVLGMYPRMLPKFVKRYADLSSLIKEAIRQYVQEVKEQQFPEEKHSFTMAPEILERIY.

Positions 45 and 84 each coordinate Mg(2+). 3-methyl-2-oxobutanoate is bound by residues 45-46 (DS), aspartate 84, and lysine 114. Mg(2+) is bound at residue glutamate 116. Catalysis depends on glutamate 183, which acts as the Proton acceptor.

It belongs to the PanB family. In terms of assembly, homodecamer; pentamer of dimers. It depends on Mg(2+) as a cofactor.

The protein resides in the cytoplasm. It carries out the reaction 3-methyl-2-oxobutanoate + (6R)-5,10-methylene-5,6,7,8-tetrahydrofolate + H2O = 2-dehydropantoate + (6S)-5,6,7,8-tetrahydrofolate. It participates in cofactor biosynthesis; (R)-pantothenate biosynthesis; (R)-pantoate from 3-methyl-2-oxobutanoate: step 1/2. Its function is as follows. Catalyzes the reversible reaction in which hydroxymethyl group from 5,10-methylenetetrahydrofolate is transferred onto alpha-ketoisovalerate to form ketopantoate. The sequence is that of 3-methyl-2-oxobutanoate hydroxymethyltransferase from Carboxydothermus hydrogenoformans (strain ATCC BAA-161 / DSM 6008 / Z-2901).